Reading from the N-terminus, the 127-residue chain is Large ribosomal subunit protein bL17 (127 aa).

This sequence belongs to the bacterial ribosomal protein bL17 family. As to quaternary structure, part of the 50S ribosomal subunit. Contacts protein L32.

This Xanthomonas euvesicatoria pv. vesicatoria (strain 85-10) (Xanthomonas campestris pv. vesicatoria) protein is Large ribosomal subunit protein bL17.